We begin with the raw amino-acid sequence, 391 residues long: S-adenosylmethionine synthase (391 aa).

Position 14 (histidine 14) interacts with ATP. Aspartate 16 provides a ligand contact to Mg(2+). K(+) is bound at residue glutamate 42. L-methionine contacts are provided by glutamate 55 and glutamine 98. The flexible loop stretch occupies residues 98 to 108 (QSADIAMGVDE). Residues 172–174 (DGK), 238–239 (RF), aspartate 247, 253–254 (RK), alanine 270, and lysine 274 each bind ATP. Residue aspartate 247 coordinates L-methionine. Residue lysine 278 coordinates L-methionine.

This sequence belongs to the AdoMet synthase family. As to quaternary structure, homotetramer; dimer of dimers. Requires Mg(2+) as cofactor. K(+) is required as a cofactor.

The protein localises to the cytoplasm. The catalysed reaction is L-methionine + ATP + H2O = S-adenosyl-L-methionine + phosphate + diphosphate. It functions in the pathway amino-acid biosynthesis; S-adenosyl-L-methionine biosynthesis; S-adenosyl-L-methionine from L-methionine: step 1/1. Its function is as follows. Catalyzes the formation of S-adenosylmethionine (AdoMet) from methionine and ATP. The overall synthetic reaction is composed of two sequential steps, AdoMet formation and the subsequent tripolyphosphate hydrolysis which occurs prior to release of AdoMet from the enzyme. This chain is S-adenosylmethionine synthase, found in Clostridium acetobutylicum (strain ATCC 824 / DSM 792 / JCM 1419 / IAM 19013 / LMG 5710 / NBRC 13948 / NRRL B-527 / VKM B-1787 / 2291 / W).